Reading from the N-terminus, the 145-residue chain is Large ribosomal subunit protein uL24 (145 aa).

2 disordered regions span residues 1–21 (MKFNPFVTSDRSKNRKRHFNA) and 122–145 (KAKSRQVGKEKGKYKEETIEKMQE). A Glycyl lysine isopeptide (Lys-Gly) (interchain with G-Cter in SUMO2) cross-link involves residue K136. The residue at position 139 (T139) is a Phosphothreonine.

It belongs to the universal ribosomal protein uL24 family. As to quaternary structure, component of the large ribosomal subunit. Interacts with DHX33. Post-translationally, ufmylated by UFL1 in response to endoplasmic reticulum stress, promoting reticulophagy of endoplasmic reticulum sheets.

It is found in the cytoplasm. Functionally, component of the large ribosomal subunit. The ribosome is a large ribonucleoprotein complex responsible for the synthesis of proteins in the cell. This Rattus norvegicus (Rat) protein is Large ribosomal subunit protein uL24 (Rpl26).